A 157-amino-acid chain; its full sequence is 2-C-methyl-D-erythritol 2,4-cyclodiphosphate synthase (157 aa).

Residues D8 and H10 each coordinate a divalent metal cation. 4-CDP-2-C-methyl-D-erythritol 2-phosphate is bound by residues 8 to 10 and 34 to 35; these read DVH and HS. Residue H42 participates in a divalent metal cation binding. 4-CDP-2-C-methyl-D-erythritol 2-phosphate contacts are provided by residues 56-58, 61-65, 100-106, 132-135, F139, and R142; these read DIG, FPDTD, AQAPKMA, and TTTE.

It belongs to the IspF family. As to quaternary structure, homotrimer. It depends on a divalent metal cation as a cofactor.

It carries out the reaction 4-CDP-2-C-methyl-D-erythritol 2-phosphate = 2-C-methyl-D-erythritol 2,4-cyclic diphosphate + CMP. Its pathway is isoprenoid biosynthesis; isopentenyl diphosphate biosynthesis via DXP pathway; isopentenyl diphosphate from 1-deoxy-D-xylulose 5-phosphate: step 4/6. Involved in the biosynthesis of isopentenyl diphosphate (IPP) and dimethylallyl diphosphate (DMAPP), two major building blocks of isoprenoid compounds. Catalyzes the conversion of 4-diphosphocytidyl-2-C-methyl-D-erythritol 2-phosphate (CDP-ME2P) to 2-C-methyl-D-erythritol 2,4-cyclodiphosphate (ME-CPP) with a corresponding release of cytidine 5-monophosphate (CMP). The protein is 2-C-methyl-D-erythritol 2,4-cyclodiphosphate synthase of Pseudomonas putida (strain GB-1).